A 338-amino-acid chain; its full sequence is NADPH dehydrogenase (338 aa).

22–25 contributes to the FMN binding site; it reads SPMC. Y27 provides a ligand contact to substrate. The FMN site is built by A59 and Q101. Residue 163–166 participates in substrate binding; the sequence is HAAH. FMN contacts are provided by residues R214 and 306–307; that span reads GR.

Belongs to the NADH:flavin oxidoreductase/NADH oxidase family. NamA subfamily. Homotetramer. FMN serves as cofactor.

The enzyme catalyses A + NADPH + H(+) = AH2 + NADP(+). Its function is as follows. Catalyzes the reduction of the double bond of an array of alpha,beta-unsaturated aldehydes and ketones. It also reduces the nitro group of nitroester and nitroaromatic compounds. It could have a role in detoxification processes. This chain is NADPH dehydrogenase, found in Listeria monocytogenes serotype 4a (strain HCC23).